Reading from the N-terminus, the 37-residue chain is Cytochrome b6-f complex subunit 5 (37 aa).

A helical membrane pass occupies residues 5–25; the sequence is LLCGIVLGLIPITLMGLFVAA.

Belongs to the PetG family. As to quaternary structure, the 4 large subunits of the cytochrome b6-f complex are cytochrome b6, subunit IV (17 kDa polypeptide, PetD), cytochrome f and the Rieske protein, while the 4 small subunits are PetG, PetL, PetM and PetN. The complex functions as a dimer.

The protein resides in the cellular thylakoid membrane. Functionally, component of the cytochrome b6-f complex, which mediates electron transfer between photosystem II (PSII) and photosystem I (PSI), cyclic electron flow around PSI, and state transitions. PetG is required for either the stability or assembly of the cytochrome b6-f complex. This Synechococcus sp. (strain CC9311) protein is Cytochrome b6-f complex subunit 5.